The chain runs to 348 residues: Holliday junction branch migration complex subunit RuvB (348 aa).

Residues 1 to 183 form a large ATPase domain (RuvB-L) region; the sequence is MTEASRIVAP…FGIPVRLNFY (183 aa). ATP is bound by residues Leu-22, Arg-23, Gly-64, Lys-67, Thr-68, Thr-69, 130–132, Arg-173, Tyr-183, and Arg-220; that span reads EDF. Thr-68 lines the Mg(2+) pocket. The segment at 184 to 254 is small ATPAse domain (RuvB-S); that stretch reads TEDELEKIVS…VADHALGALE (71 aa). The head domain (RuvB-H) stretch occupies residues 257 to 348; the sequence is AAGLDAMDRR…SGLFGQDEDR (92 aa). Residues Arg-293, Arg-312, and Arg-317 each coordinate DNA. Positions 329–348 are disordered; that stretch reads LTEPSRDPAQSGLFGQDEDR.

The protein belongs to the RuvB family. In terms of assembly, homohexamer. Forms an RuvA(8)-RuvB(12)-Holliday junction (HJ) complex. HJ DNA is sandwiched between 2 RuvA tetramers; dsDNA enters through RuvA and exits via RuvB. An RuvB hexamer assembles on each DNA strand where it exits the tetramer. Each RuvB hexamer is contacted by two RuvA subunits (via domain III) on 2 adjacent RuvB subunits; this complex drives branch migration. In the full resolvosome a probable DNA-RuvA(4)-RuvB(12)-RuvC(2) complex forms which resolves the HJ.

Its subcellular location is the cytoplasm. The catalysed reaction is ATP + H2O = ADP + phosphate + H(+). In terms of biological role, the RuvA-RuvB-RuvC complex processes Holliday junction (HJ) DNA during genetic recombination and DNA repair, while the RuvA-RuvB complex plays an important role in the rescue of blocked DNA replication forks via replication fork reversal (RFR). RuvA specifically binds to HJ cruciform DNA, conferring on it an open structure. The RuvB hexamer acts as an ATP-dependent pump, pulling dsDNA into and through the RuvAB complex. RuvB forms 2 homohexamers on either side of HJ DNA bound by 1 or 2 RuvA tetramers; 4 subunits per hexamer contact DNA at a time. Coordinated motions by a converter formed by DNA-disengaged RuvB subunits stimulates ATP hydrolysis and nucleotide exchange. Immobilization of the converter enables RuvB to convert the ATP-contained energy into a lever motion, pulling 2 nucleotides of DNA out of the RuvA tetramer per ATP hydrolyzed, thus driving DNA branch migration. The RuvB motors rotate together with the DNA substrate, which together with the progressing nucleotide cycle form the mechanistic basis for DNA recombination by continuous HJ branch migration. Branch migration allows RuvC to scan DNA until it finds its consensus sequence, where it cleaves and resolves cruciform DNA. This Nitrobacter winogradskyi (strain ATCC 25391 / DSM 10237 / CIP 104748 / NCIMB 11846 / Nb-255) protein is Holliday junction branch migration complex subunit RuvB.